The following is a 241-amino-acid chain: PHD finger protein ALFIN-LIKE 1 (241 aa).

A2 bears the N-acetylalanine mark. A disordered region spans residues 142-182 (DGKPSMDLGSKSRNGVKRSIEGQTKSTPKLMEESYEDEDDE). The PHD-type zinc-finger motif lies at 185–237 (DTLCGSCGGNYTNDEFWICCDVCERWYHGKCVKITPAKAESIKQYKCPSCCTK).

It belongs to the Alfin family. In terms of assembly, interacts with H3K4me3 and to a lesser extent with H3K4me2. As to expression, ubiquitously expressed.

The protein localises to the nucleus. Functionally, histone-binding component that specifically recognizes H3 tails trimethylated on 'Lys-4' (H3K4me3), which mark transcription start sites of virtually all active genes. This chain is PHD finger protein ALFIN-LIKE 1 (AL1), found in Arabidopsis thaliana (Mouse-ear cress).